The following is a 946-amino-acid chain: Probable outer membrane protein pmp18 (946 aa).

The first 16 residues, 1 to 16 (MQNNRSLSKSSFFVGA), serve as a signal peptide directing secretion. The Autotransporter domain occupies 668–946 (QGQIAPTASG…YLHAGTTFKF (279 aa)).

Belongs to the PMP outer membrane protein family.

The protein resides in the secreted. It is found in the cell wall. It localises to the cell outer membrane. The sequence is that of Probable outer membrane protein pmp18 (pmp18) from Chlamydia pneumoniae (Chlamydophila pneumoniae).